The chain runs to 181 residues: Peptidyl-tRNA hydrolase (181 aa).

Residue Tyr14 participates in tRNA binding. His19 serves as the catalytic Proton acceptor. TRNA contacts are provided by Tyr62, Asn64, and Asn108.

The protein belongs to the PTH family. In terms of assembly, monomer.

Its subcellular location is the cytoplasm. The catalysed reaction is an N-acyl-L-alpha-aminoacyl-tRNA + H2O = an N-acyl-L-amino acid + a tRNA + H(+). Its function is as follows. Hydrolyzes ribosome-free peptidyl-tRNAs (with 1 or more amino acids incorporated), which drop off the ribosome during protein synthesis, or as a result of ribosome stalling. Functionally, catalyzes the release of premature peptidyl moieties from peptidyl-tRNA molecules trapped in stalled 50S ribosomal subunits, and thus maintains levels of free tRNAs and 50S ribosomes. This is Peptidyl-tRNA hydrolase from Campylobacter jejuni subsp. doylei (strain ATCC BAA-1458 / RM4099 / 269.97).